The primary structure comprises 132 residues: ATP synthase epsilon chain (132 aa).

This sequence belongs to the ATPase epsilon chain family. In terms of assembly, F-type ATPases have 2 components, CF(1) - the catalytic core - and CF(0) - the membrane proton channel. CF(1) has five subunits: alpha(3), beta(3), gamma(1), delta(1), epsilon(1). CF(0) has three main subunits: a, b and c.

Its subcellular location is the cell membrane. In terms of biological role, produces ATP from ADP in the presence of a proton gradient across the membrane. This is ATP synthase epsilon chain from Desulfitobacterium hafniense (strain Y51).